The following is a 407-amino-acid chain: Inactive non-canonical poly(A) RNA polymerase protein Trf4-2 (407 aa).

Mg(2+)-binding residues include Asp-85 and Asp-87. One can recognise a PAP-associated domain in the interval 221–280 (LALLLIQFLDYYGRKFDFFKYGISVLGQGGCVEKARLRSTLGENNWQSVLCIEDPVTPTN). The tract at residues 354–390 (LVQPSPTGSTSPSASASASEDERSGGPATIGFGRCDD) is disordered. Low complexity predominate over residues 357–371 (PSPTGSTSPSASASA).

It belongs to the DNA polymerase type-B-like family.

This Drosophila melanogaster (Fruit fly) protein is Inactive non-canonical poly(A) RNA polymerase protein Trf4-2.